We begin with the raw amino-acid sequence, 335 residues long: tRNA N6-adenosine threonylcarbamoyltransferase (335 aa).

Residues H109, H113, and Y130 each coordinate a divalent metal cation. Substrate contacts are provided by residues 130-134 (YVSGG), D162, G177, E181, and N266. D294 is a binding site for a divalent metal cation.

Belongs to the KAE1 / TsaD family. Component of the EKC/KEOPS complex composed of at least tp53rk, tprkb, osgep and lage3; the whole complex dimerizes. A divalent metal cation serves as cofactor.

The protein localises to the cytoplasm. Its subcellular location is the nucleus. It carries out the reaction L-threonylcarbamoyladenylate + adenosine(37) in tRNA = N(6)-L-threonylcarbamoyladenosine(37) in tRNA + AMP + H(+). Functionally, component of the EKC/KEOPS complex that is required for the formation of a threonylcarbamoyl group on adenosine at position 37 (t(6)A37) in tRNAs that read codons beginning with adenine. The complex is probably involved in the transfer of the threonylcarbamoyl moiety of threonylcarbamoyl-AMP (TC-AMP) to the N6 group of A37. OSGEP likely plays a direct catalytic role in this reaction, but requires other protein(s) of the complex to fulfill this activity. The sequence is that of tRNA N6-adenosine threonylcarbamoyltransferase from Danio rerio (Zebrafish).